Reading from the N-terminus, the 288-residue chain is Large ribosomal subunit protein uL2 (288 aa).

The segment at 232-265 (GTAMNPVDHPHGGGEGKTKGKHPESPWGWKTKGY) is disordered. Basic and acidic residues predominate over residues 239–255 (DHPHGGGEGKTKGKHPE).

Belongs to the universal ribosomal protein uL2 family. Part of the 50S ribosomal subunit. Forms a bridge to the 30S subunit in the 70S ribosome.

One of the primary rRNA binding proteins. Required for association of the 30S and 50S subunits to form the 70S ribosome, for tRNA binding and peptide bond formation. It has been suggested to have peptidyltransferase activity; this is somewhat controversial. Makes several contacts with the 16S rRNA in the 70S ribosome. This chain is Large ribosomal subunit protein uL2, found in Hydrogenobaculum sp. (strain Y04AAS1).